The following is an 803-amino-acid chain: Ribonuclease II, chloroplastic/mitochondrial (803 aa).

The transit peptide at 1-35 (MMSVRAINGCSIIRTATSAGGPPVSLFRHRIQRLR) directs the protein to the chloroplast and mitochondrion. Residues 399 to 694 (RIDLTHLKVY…AHYQIKAFLR (296 aa)) enclose the RNB domain.

It belongs to the RNR ribonuclease family. In terms of tissue distribution, expressed in seedlings, roots, leaves and flowers.

Its subcellular location is the mitochondrion. It localises to the plastid. It is found in the chloroplast. The enzyme catalyses Exonucleolytic cleavage in the 3'- to 5'-direction to yield nucleoside 5'-phosphates.. Its function is as follows. 3'-5' exoribonuclease that catalyzes 3' maturation of chloroplast and mitochondrion ribosomal RNAs; degrades short nucleotidic extensions to generate the mature 3'-ends. Involved in the maturation of 23S, 16S and 5S rRNAs. This chain is Ribonuclease II, chloroplastic/mitochondrial (RNR1), found in Arabidopsis thaliana (Mouse-ear cress).